The primary structure comprises 679 residues: MDHLLLKTQTQTEQVMNVTNPNSIYIKGRLYFKGYKKIELHCFVDTGASLCIASKFVIPEEHWVNAERPIMVKIADGSSITISKVCKDIDLIIAREIFKIPTVYQQESGIDFIIGNNFCQLYEPFIQFTDRVIFTKNKSYPVHIAKLTRAVRVGTEGFLESMKKRSKTQQPEPVNISTNKIENPLKEIAILSEGRRLSEEKLFITQQRMQKIEELLEKVCSENPLDPNKTKQWMKASIKLSDPSKAIKVKPMKYSPMDREEFDKQIKELLDLKVIKPSKSPHMAPAFLVNNEAEKRRGKKRMVVNYKAMNKATIGDAYNLPNKDELLTLIRGKKIFSSFDCKSGFWQVLLDQESRPLTAFTCPQGHYEWNVVPFGLKQAPSIFQRHMDEAFRVFRKFCCVYVDDILVFSNNEEDHLLHVAMILQKCNQHGIILSKKKAQLFKKKINFLGLEIDEGTHKPQGHILEHINKFPDTLEDKKQLQRFLGILTYASDYIPKLAQIRKPLQAKLKENVPWKWTKEDTLYMQKVKKNLQGFPPLHHPLPEEKLIIETDASDDYWGGMLKAIKINEGTNTELICRYASGSFKAAERNYHSNDKETLAVINTIKKFSIYLTPVHFLIRTDNTHFKSFVNLNYKGDSKLGRNIRWQAWLSHYSFDVEHIKGTDNHFADFLSREFNKVNS.

The interval 40–130 is protease; it reads LHCFVDTGAS…LYEPFIQFTD (91 aa). Aspartate 45 is a catalytic residue. Residues 272-452 enclose the Reverse transcriptase domain; sequence LKVIKPSKSP…KKINFLGLEI (181 aa).

This sequence belongs to the caulimoviridae enzymatic polyprotein family.

The enzyme catalyses DNA(n) + a 2'-deoxyribonucleoside 5'-triphosphate = DNA(n+1) + diphosphate. Functionally, encodes for at least two polypeptides: protease (PR) and reverse transcriptase (RT). The protease processes the polyprotein in cis. Reverse transcriptase is multifunctional enzyme that converts the viral RNA genome into dsDNA in viral cytoplasmic capsids. This enzyme displays a DNA polymerase activity that can copy either DNA or RNA templates, and a ribonuclease H (RNase H) activity that cleaves the RNA strand of RNA-DNA heteroduplexes in a partially processive 3'- to 5'-endonucleasic mode. Neo-synthesized pregenomic RNA (pgRNA) are encapsidated, and reverse-transcribed inside the nucleocapsid. Partial (+)DNA is synthesized from the (-)DNA template and generates the relaxed circular DNA (RC-DNA) genome. After budding and infection, the RC-DNA migrates in the nucleus, and is converted into a plasmid-like covalently closed circular DNA (cccDNA). The polypeptide is Enzymatic polyprotein (Cauliflower mosaic virus (strain BBC) (CaMV)).